A 366-amino-acid chain; its full sequence is MRLSDFDFDLPEDRIALRPAEPRDSARFLVVRPGQAVADHIVSDLPDFLRPGDALVFNDTRVIPARLSGLREGRTTGGADGTPVAVEATLHRRLAPDRWSAFMRPGKRLKVGDRVAFGGHEGRVGDLGRLDAVIAEKHDGGEVVLAFDLSGPDLDVGIAQHGDMPLPPYIAAKRGEDERDRADYQTVYAREDGSVAAPTAGLHFTPQLLERLKAKGVSLHFVTLHVGAGTFLPVKTDEVSEHRMHAEYGQVTQEIADALNAARAAGGRIVCVGTTSLRLLESATGEDGIVRPFADETAIFITPGYRFRTADVLMTNFHLPKSTLFMLVSAFAGTEAMRAAYEHAIATGYRFYSYGDSSLLFKDETC.

It belongs to the QueA family. In terms of assembly, monomer.

The protein resides in the cytoplasm. It carries out the reaction 7-aminomethyl-7-carbaguanosine(34) in tRNA + S-adenosyl-L-methionine = epoxyqueuosine(34) in tRNA + adenine + L-methionine + 2 H(+). It functions in the pathway tRNA modification; tRNA-queuosine biosynthesis. Its function is as follows. Transfers and isomerizes the ribose moiety from AdoMet to the 7-aminomethyl group of 7-deazaguanine (preQ1-tRNA) to give epoxyqueuosine (oQ-tRNA). The polypeptide is S-adenosylmethionine:tRNA ribosyltransferase-isomerase (Caulobacter vibrioides (strain ATCC 19089 / CIP 103742 / CB 15) (Caulobacter crescentus)).